A 408-amino-acid chain; its full sequence is Multidrug resistance protein MdtG (408 aa).

The next 10 membrane-spanning stretches (helical) occupy residues 13–33 (LYIA…VMPF), 51–71 (LWSG…SPFW), 89–109 (LGMA…QFLL), 112–132 (AALG…AIQV), 138–158 (GWAL…GPLL), 170–190 (PVFF…FFFI), 221–241 (LFVT…ILTL), 253–273 (LAFI…LSAP), 287–307 (ILVA…FVQS), and 375–395 (AVFL…WLSL).

It belongs to the major facilitator superfamily. DHA1 family. MdtG (TC 2.A.1.2.20) subfamily.

It localises to the cell inner membrane. In Dickeya zeae (strain Ech586) (Dickeya dadantii (strain Ech586)), this protein is Multidrug resistance protein MdtG.